The primary structure comprises 510 residues: MKLAHWMYAGPAHIGTLRVASSFKNVHAIMHAPLGDDYFNVMRSMLERERNFTPATASIVDRHVLARGSRKRVVDHIIRKDKEEGPDLIILTPTCTSSILQEDLKNFVDRASIISDCNVIFADVDHYQVNEIQAADRTLEQVVRYYLEKSHTLDQFVTDAPSVNIIGILTLGFHNRHDCRELRRLLKDLDIRINQIIPEGGSVEDPKNLPKARFNLIPYREVGLMTAMYLNKEFGMPYVSTTPMGAVDMAECIRQIKKSLETLAAPILSSKRVDYESYIDGQTRFVSQAAWFSRSIDCQNFTGKETVVFGDATHAASITKILAREMGIRVSCTGTYCKHDAEWFKEQIKDFCDEIIITDDHAEVGDIISRVEPSAIFGTQMERHIGKRLEIPCGVISAPAHIQNFSLGYRPFLGYEGTNQIADLVYNSFALGMEDHLLDIFCGHDTKEIMTKSLSTDISPIWDPESRQELGKIPRFVRDEVKRNTEKFARRKGILNVTVEVMHAAKEALS.

Position 36 (aspartate 36) interacts with [4Fe-4S] cluster. The Proton donor role is filled by aspartate 297. A substrate-binding site is contributed by 432-433; it reads GM.

It belongs to the ChlB/BchB/BchZ family. As to quaternary structure, protochlorophyllide reductase is composed of three subunits; ChlL, ChlN and ChlB. Forms a heterotetramer of two ChlB and two ChlN subunits. [4Fe-4S] cluster serves as cofactor.

It localises to the plastid. The protein localises to the chloroplast. It carries out the reaction chlorophyllide a + oxidized 2[4Fe-4S]-[ferredoxin] + 2 ADP + 2 phosphate = protochlorophyllide a + reduced 2[4Fe-4S]-[ferredoxin] + 2 ATP + 2 H2O. It participates in porphyrin-containing compound metabolism; chlorophyll biosynthesis (light-independent). Component of the dark-operative protochlorophyllide reductase (DPOR) that uses Mg-ATP and reduced ferredoxin to reduce ring D of protochlorophyllide (Pchlide) to form chlorophyllide a (Chlide). This reaction is light-independent. The NB-protein (ChlN-ChlB) is the catalytic component of the complex. This is Light-independent protochlorophyllide reductase subunit B from Pinus thunbergii (Japanese black pine).